A 75-amino-acid polypeptide reads, in one-letter code: Large ribosomal subunit protein bL31 (75 aa).

It belongs to the bacterial ribosomal protein bL31 family. Type A subfamily. In terms of assembly, part of the 50S ribosomal subunit.

Its function is as follows. Binds the 23S rRNA. The sequence is that of Large ribosomal subunit protein bL31 from Chlorobaculum tepidum (strain ATCC 49652 / DSM 12025 / NBRC 103806 / TLS) (Chlorobium tepidum).